A 354-amino-acid polypeptide reads, in one-letter code: WASH complex subunit 3 (354 aa).

Residues 76–354 (SSANVPVHNT…DDDDDDDESW (279 aa)) are disordered. Over residues 107-143 (IPPPPPPPPPPMTGVPPPPPPPPPPPISKSNIPPPPA) the composition is skewed to pro residues. Over residues 150–159 (ESDDDDEDNN) the composition is skewed to acidic residues. Pro residues predominate over residues 213–244 (PQPPQPQPQSPSPQPPPPPTTTSSIPVPPPPF). Residues 251 to 260 (SDDDDDDDEG) are compositionally biased toward acidic residues. A compositionally biased stretch (low complexity) spans 277–290 (NNNSNSNSYSNNNN). 2 stretches are compositionally biased toward acidic residues: residues 293–307 (DDDD…DDDN) and 342–354 (DADD…DESW).

The protein belongs to the CCDC53 family. In terms of assembly, probable component of the WASH complex.

The chain is WASH complex subunit 3 from Dictyostelium discoideum (Social amoeba).